The chain runs to 295 residues: ATP synthase gamma chain (295 aa).

It belongs to the ATPase gamma chain family. As to quaternary structure, F-type ATPases have 2 components, CF(1) - the catalytic core - and CF(0) - the membrane proton channel. CF(1) has five subunits: alpha(3), beta(3), gamma(1), delta(1), epsilon(1). CF(0) has three main subunits: a, b and c.

It is found in the cell inner membrane. Produces ATP from ADP in the presence of a proton gradient across the membrane. The gamma chain is believed to be important in regulating ATPase activity and the flow of protons through the CF(0) complex. This Methylorubrum populi (strain ATCC BAA-705 / NCIMB 13946 / BJ001) (Methylobacterium populi) protein is ATP synthase gamma chain.